Reading from the N-terminus, the 672-residue chain is Fumonisin cluster-specific transcription factor FUM21 (672 aa).

The segment at residues 30 to 56 (CESCKRRKVRCNGTNPCNQCQKSSIEC) is a DNA-binding region (zn(2)-C6 fungal-type). Disordered regions lie at residues 65 to 111 (ANDG…RFDG) and 190 to 212 (KSSG…GFNT). The span at 77–93 (SPVQHTRGSLTPPQTSP) shows a compositional bias: polar residues.

Its subcellular location is the nucleus. Functionally, transcription factor that regulates the expression of the gene cluster that mediates the biosynthesis of fumonisins B1 (FB1), B2 (FB2), B3 (FB3), and B4 (FB4), which are carcinogenic mycotoxins. In Gibberella moniliformis (strain M3125 / FGSC 7600) (Maize ear and stalk rot fungus), this protein is Fumonisin cluster-specific transcription factor FUM21 (FUM21).